We begin with the raw amino-acid sequence, 162 residues long: NADH-quinone oxidoreductase subunit I (162 aa).

2 consecutive 4Fe-4S ferredoxin-type domains span residues 54-83 and 93-122; these read RRYE…IESE and TRYD…ETQI. Residues C63, C66, C69, C73, C102, C105, C108, and C112 each contribute to the [4Fe-4S] cluster site.

This sequence belongs to the complex I 23 kDa subunit family. In terms of assembly, NDH-1 is composed of 14 different subunits. Subunits NuoA, H, J, K, L, M, N constitute the membrane sector of the complex. [4Fe-4S] cluster serves as cofactor.

Its subcellular location is the cell inner membrane. The enzyme catalyses a quinone + NADH + 5 H(+)(in) = a quinol + NAD(+) + 4 H(+)(out). In terms of biological role, NDH-1 shuttles electrons from NADH, via FMN and iron-sulfur (Fe-S) centers, to quinones in the respiratory chain. The immediate electron acceptor for the enzyme in this species is believed to be ubiquinone. Couples the redox reaction to proton translocation (for every two electrons transferred, four hydrogen ions are translocated across the cytoplasmic membrane), and thus conserves the redox energy in a proton gradient. The chain is NADH-quinone oxidoreductase subunit I from Burkholderia cenocepacia (strain ATCC BAA-245 / DSM 16553 / LMG 16656 / NCTC 13227 / J2315 / CF5610) (Burkholderia cepacia (strain J2315)).